Here is a 146-residue protein sequence, read N- to C-terminus: Universal stress protein MTH_1154 (146 aa).

It belongs to the universal stress protein A family.

The sequence is that of Universal stress protein MTH_1154 from Methanothermobacter thermautotrophicus (strain ATCC 29096 / DSM 1053 / JCM 10044 / NBRC 100330 / Delta H) (Methanobacterium thermoautotrophicum).